Consider the following 132-residue polypeptide: Protein NrdI (132 aa).

Belongs to the NrdI family.

Functionally, probably involved in ribonucleotide reductase function. This chain is Protein NrdI, found in Staphylococcus epidermidis (strain ATCC 35984 / DSM 28319 / BCRC 17069 / CCUG 31568 / BM 3577 / RP62A).